Reading from the N-terminus, the 412-residue chain is Argininosuccinate synthase (412 aa).

ATP-binding positions include 20–28 (AYSGGLDTS) and Ala-48. Residues Tyr-100 and Ser-105 each coordinate L-citrulline. ATP is bound at residue Gly-130. 3 residues coordinate L-aspartate: Thr-132, Asn-136, and Asp-137. Asn-136 is an L-citrulline binding site. The L-citrulline site is built by Arg-140, Ser-189, Ser-198, Glu-274, and Tyr-286.

It belongs to the argininosuccinate synthase family. Type 1 subfamily. In terms of assembly, homotetramer.

It localises to the cytoplasm. It carries out the reaction L-citrulline + L-aspartate + ATP = 2-(N(omega)-L-arginino)succinate + AMP + diphosphate + H(+). It participates in amino-acid biosynthesis; L-arginine biosynthesis; L-arginine from L-ornithine and carbamoyl phosphate: step 2/3. The chain is Argininosuccinate synthase from Shewanella pealeana (strain ATCC 700345 / ANG-SQ1).